The sequence spans 281 residues: 3-hydroxybutyryl-CoA dehydrogenase (281 aa).

Belongs to the 3-hydroxyacyl-CoA dehydrogenase family.

It catalyses the reaction (3S)-3-hydroxybutanoyl-CoA + NADP(+) = acetoacetyl-CoA + NADPH + H(+). Its pathway is lipid metabolism; butanoate metabolism. The chain is 3-hydroxybutyryl-CoA dehydrogenase (hbd) from Clostridioides difficile (Peptoclostridium difficile).